Consider the following 310-residue polypeptide: Methionyl-tRNA formyltransferase (310 aa).

110–113 (SLLP) contacts (6S)-5,6,7,8-tetrahydrofolate.

Belongs to the Fmt family.

The catalysed reaction is L-methionyl-tRNA(fMet) + (6R)-10-formyltetrahydrofolate = N-formyl-L-methionyl-tRNA(fMet) + (6S)-5,6,7,8-tetrahydrofolate + H(+). Its function is as follows. Attaches a formyl group to the free amino group of methionyl-tRNA(fMet). The formyl group appears to play a dual role in the initiator identity of N-formylmethionyl-tRNA by promoting its recognition by IF2 and preventing the misappropriation of this tRNA by the elongation apparatus. The protein is Methionyl-tRNA formyltransferase of Clostridium tetani (strain Massachusetts / E88).